Reading from the N-terminus, the 191-residue chain is TATA-box-binding protein (191 aa).

Repeat copies occupy residues 18–94 (LQNV…AKIV) and 108–185 (IQNI…YPVL).

The protein belongs to the TBP family. In terms of assembly, belongs to the TFIID complex together with the TBP-associated factors (TAFs). Binds DNA as monomer.

The protein resides in the nucleus. In terms of biological role, general transcription factor that functions at the core of the DNA-binding multiprotein factor TFIID. Binding of TFIID to the TATA box is the initial transcriptional step of the pre-initiation complex (PIC), playing a role in the activation of eukaryotic genes transcribed by RNA polymerase II. In Acetabularia peniculus (Green alga), this protein is TATA-box-binding protein.